The primary structure comprises 240 residues: Lactate utilization protein C (240 aa).

The protein belongs to the LutC/YkgG family.

Its function is as follows. Is involved in L-lactate degradation and allows cells to grow with lactate as the sole carbon source. This Bacillus licheniformis (strain ATCC 14580 / DSM 13 / JCM 2505 / CCUG 7422 / NBRC 12200 / NCIMB 9375 / NCTC 10341 / NRRL NRS-1264 / Gibson 46) protein is Lactate utilization protein C.